A 62-amino-acid polypeptide reads, in one-letter code: uncharacterized protein (62 aa).

Residues 26–62 (YELATLYEAMQKENEEQIEQSKNKLERLRKEWIRLNG) are a coiled coil.

This is an uncharacterized protein from Bacillus subtilis (strain 168).